The chain runs to 456 residues: Bifunctional protein GlmU (456 aa).

Residues 1–228 form a pyrophosphorylase region; the sequence is MPQNTLNTVI…SHLAAGVNNK (228 aa). Residues 11–14, Lys25, Gln75, 80–81, 102–104, Gly138, Glu153, Asn168, and Asn226 each bind UDP-N-acetyl-alpha-D-glucosamine; these read LAAG, GT, and YGD. Asp104 contacts Mg(2+). Asn226 contributes to the Mg(2+) binding site. The interval 229 to 249 is linker; that stretch reads RQLAELERIFQTEQAQELLKA. The N-acetyltransferase stretch occupies residues 250 to 456; it reads GVTLRDPARF…GWVRPEKNKQ (207 aa). Residues Arg332 and Lys350 each contribute to the UDP-N-acetyl-alpha-D-glucosamine site. His362 acts as the Proton acceptor in catalysis. UDP-N-acetyl-alpha-D-glucosamine contacts are provided by Tyr365 and Asn376. Residues Ala379, 385 to 386, Ser404, Ala422, and Arg439 each bind acetyl-CoA; that span reads NY.

This sequence in the N-terminal section; belongs to the N-acetylglucosamine-1-phosphate uridyltransferase family. In the C-terminal section; belongs to the transferase hexapeptide repeat family. As to quaternary structure, homotrimer. The cofactor is Mg(2+).

Its subcellular location is the cytoplasm. The enzyme catalyses alpha-D-glucosamine 1-phosphate + acetyl-CoA = N-acetyl-alpha-D-glucosamine 1-phosphate + CoA + H(+). It carries out the reaction N-acetyl-alpha-D-glucosamine 1-phosphate + UTP + H(+) = UDP-N-acetyl-alpha-D-glucosamine + diphosphate. The protein operates within nucleotide-sugar biosynthesis; UDP-N-acetyl-alpha-D-glucosamine biosynthesis; N-acetyl-alpha-D-glucosamine 1-phosphate from alpha-D-glucosamine 6-phosphate (route II): step 2/2. It functions in the pathway nucleotide-sugar biosynthesis; UDP-N-acetyl-alpha-D-glucosamine biosynthesis; UDP-N-acetyl-alpha-D-glucosamine from N-acetyl-alpha-D-glucosamine 1-phosphate: step 1/1. Its pathway is bacterial outer membrane biogenesis; LPS lipid A biosynthesis. Catalyzes the last two sequential reactions in the de novo biosynthetic pathway for UDP-N-acetylglucosamine (UDP-GlcNAc). The C-terminal domain catalyzes the transfer of acetyl group from acetyl coenzyme A to glucosamine-1-phosphate (GlcN-1-P) to produce N-acetylglucosamine-1-phosphate (GlcNAc-1-P), which is converted into UDP-GlcNAc by the transfer of uridine 5-monophosphate (from uridine 5-triphosphate), a reaction catalyzed by the N-terminal domain. The polypeptide is Bifunctional protein GlmU (Neisseria gonorrhoeae).